The primary structure comprises 102 residues: Small ribosomal subunit protein uS10 (102 aa).

Belongs to the universal ribosomal protein uS10 family. In terms of assembly, part of the 30S ribosomal subunit.

Functionally, involved in the binding of tRNA to the ribosomes. This chain is Small ribosomal subunit protein uS10, found in Malacoplasma penetrans (strain HF-2) (Mycoplasma penetrans).